A 373-amino-acid polypeptide reads, in one-letter code: MHFFVRKYRGKAALLSIGTFDGYKIYNCDPFGKCFHKIQGATSIVEMLFSTSLVALVEKDDGNNRKLKLINTKKSTTICELTFPTPLLAVKLNRKRLLAVLEEQIYVYDISNMLLLHTIETTSNVFAVCALSPNSENCYLAYPDSRDHEPRTEGESSSPNVSNSAVSGQVILWDVINCKQITKIEAHKDSLACLAFNSDGTMLATASDNGRIIRVFAIPSGQRLYQFRRGSLPAQIYSIAFHPDSSLLTVTSSTQTVHIFRLKEVYSNLERQGLLPSSPPPKESLLRRSSRSLIGTVGGYLPQSVSGMLDPERDFAYAHIPGDKVTSIAAFGPDNTIVNVATYDGNLYSFRVNLRTGGECAMVNHFCVGLTAA.

Residues 142-163 are disordered; that stretch reads YPDSRDHEPRTEGESSSPNVSN. Over residues 144–154 the composition is skewed to basic and acidic residues; it reads DSRDHEPRTEG. 3 WD repeats span residues 144 to 183, 186 to 226, and 231 to 270; these read DSRD…QITK, AHKD…RLYQ, and SLPA…SNLE. Residues 227–231 carry the L/FRRG motif motif; sequence FRRGS.

The protein belongs to the WD repeat PROPPIN family. Component of the PI(3,5)P2 regulatory complex. Interacts with atg5.

It is found in the preautophagosomal structure membrane. The protein localises to the vacuole membrane. Its subcellular location is the endosome membrane. In terms of biological role, the PI(3,5)P2 regulatory complex regulates both the synthesis and turnover of phosphatidylinositol 3,5-bisphosphate (PtdIns(3,5)P2). Necessary for proper vacuole morphology. Plays an important role in osmotically-induced vacuole fragmentation. Required for cytoplasm to vacuole transport (Cvt) vesicle formation, pexophagy and starvation-induced autophagy. Involved in correct atg9 trafficking to the preautophagosomal structure. Might also be involved in premeiotic DNA replication. Required for the recruitment of the atg5-atg12/atg16 complex to the preautophagosomal structure. This chain is Autophagy-related protein 18 (atg18), found in Schizosaccharomyces pombe (strain 972 / ATCC 24843) (Fission yeast).